The primary structure comprises 107 residues: Pro-corazonin (107 aa).

The first 21 residues, 1-21 (MVNSQILILFILSLTITIVMC), serve as a signal peptide directing secretion. Glutamine 22 is modified (pyrrolidone carboxylic acid). The residue at position 32 (asparagine 32) is an Asparagine amide. Residues 88 to 107 (SFSENMINDHRQPAPTNNNY) constitute a propeptide that is removed on maturation.

This sequence belongs to the corazonin family. In the adult brain, expressed in four neurons of the lateral protocerebrum project axons towards the retrocerebral complex.

The protein localises to the secreted. Its function is as follows. Cardioactive peptide. Corazonin is probably involved in the physiological regulation of the heart beat. In Apis mellifera (Honeybee), this protein is Pro-corazonin.